Reading from the N-terminus, the 402-residue chain is LIM/homeobox protein Lhx5 (402 aa).

LIM zinc-binding domains follow at residues Val3–Gly61 and Thr62–Leu125. Low complexity predominate over residues Ser124 to Pro148. Disordered regions lie at residues Ser124–Thr186 and His298–Trp402. Positions Asp151–Ala167 are enriched in basic and acidic residues. The segment at residues Arg180 to Lys239 is a DNA-binding region (homeobox). Composition is skewed to low complexity over residues Pro300 to Ser311 and Pro322 to Ala336.

The protein resides in the nucleus. Functionally, plays an essential role in the regulation of neuronal differentiation and migration during development of the central nervous system. This Mus musculus (Mouse) protein is LIM/homeobox protein Lhx5 (Lhx5).